Reading from the N-terminus, the 164-residue chain is Lipocalin-like 1 protein (164 aa).

It belongs to the calycin superfamily. Lipocalin family.

This Homo sapiens (Human) protein is Lipocalin-like 1 protein (LCNL1).